A 424-amino-acid polypeptide reads, in one-letter code: Probable threonylcarbamoyladenosine tRNA methylthiotransferase (424 aa).

The MTTase N-terminal domain maps to 4–115; the sequence is IRVYIETFGC…APQAVRAASN (112 aa). [4Fe-4S] cluster is bound by residues C13, C48, C79, C150, C154, and C157. One can recognise a Radical SAM core domain in the interval 136–365; that stretch reads RSNPLIHIIP…EELKMRITEE (230 aa). A TRAM domain is found at 368–424; sequence RRLVGSFQEILVVERGRKGGFIGRTGSYIPVVTETGEPGSFRRVRIRDATGTYLLAD.

Belongs to the methylthiotransferase family. CDKAL1 subfamily. It depends on [4Fe-4S] cluster as a cofactor.

It catalyses the reaction N(6)-L-threonylcarbamoyladenosine(37) in tRNA + (sulfur carrier)-SH + AH2 + 2 S-adenosyl-L-methionine = 2-methylsulfanyl-N(6)-L-threonylcarbamoyladenosine(37) in tRNA + (sulfur carrier)-H + 5'-deoxyadenosine + L-methionine + A + S-adenosyl-L-homocysteine + 2 H(+). Its function is as follows. Catalyzes the methylthiolation of N6-threonylcarbamoyladenosine (t(6)A), leading to the formation of 2-methylthio-N6-threonylcarbamoyladenosine (ms(2)t(6)A) at position 37 in tRNAs that read codons beginning with adenine. This chain is Probable threonylcarbamoyladenosine tRNA methylthiotransferase, found in Methanothermobacter thermautotrophicus (strain ATCC 29096 / DSM 1053 / JCM 10044 / NBRC 100330 / Delta H) (Methanobacterium thermoautotrophicum).